The primary structure comprises 490 residues: Protein nucleotidyltransferase YdiU (490 aa).

ATP is bound by residues G94, G96, R97, K117, D129, G130, R180, and R187. The active-site Proton acceptor is the D256. The Mg(2+) site is built by N257 and D266. D266 contacts ATP.

The protein belongs to the SELO family. Mg(2+) is required as a cofactor. The cofactor is Mn(2+).

It carries out the reaction L-seryl-[protein] + ATP = 3-O-(5'-adenylyl)-L-seryl-[protein] + diphosphate. The catalysed reaction is L-threonyl-[protein] + ATP = 3-O-(5'-adenylyl)-L-threonyl-[protein] + diphosphate. The enzyme catalyses L-tyrosyl-[protein] + ATP = O-(5'-adenylyl)-L-tyrosyl-[protein] + diphosphate. It catalyses the reaction L-histidyl-[protein] + UTP = N(tele)-(5'-uridylyl)-L-histidyl-[protein] + diphosphate. It carries out the reaction L-seryl-[protein] + UTP = O-(5'-uridylyl)-L-seryl-[protein] + diphosphate. The catalysed reaction is L-tyrosyl-[protein] + UTP = O-(5'-uridylyl)-L-tyrosyl-[protein] + diphosphate. Nucleotidyltransferase involved in the post-translational modification of proteins. It can catalyze the addition of adenosine monophosphate (AMP) or uridine monophosphate (UMP) to a protein, resulting in modifications known as AMPylation and UMPylation. This is Protein nucleotidyltransferase YdiU from Clostridium beijerinckii (strain ATCC 51743 / NCIMB 8052) (Clostridium acetobutylicum).